The following is a 538-amino-acid chain: SWM histone demethylase complex subunit phf2 (538 aa).

Disordered stretches follow at residues 28-47, 98-150, and 198-222; these read RFPN…NQNG, EIES…SSPL, and TKSG…RRRG. The segment covering 98–111 has biased composition (basic and acidic residues); it reads EIESSKNQETDAKS. The segment at 232-288 adopts a PHD-type zinc-finger fold; it reads AMKCSVCQRLQSPPKNRIVFCDGCNTPFHQLCHEPYISDELLDSPNGEWFCDDCIRR. The span at 367–392 shows a compositional bias: polar residues; the sequence is GDQYLSLNNGTESQSKTTKHSTSLPS. The tract at residues 367–396 is disordered; that stretch reads GDQYLSLNNGTESQSKTTKHSTSLPSTEPV.

Component of the SWM histone demethylase complex composed of at least lsd1, lsd2, phf1 and phf2.

The protein resides in the nucleus. In terms of biological role, component of the SWM histone demethylase complex that specifically demethylates H3K9me2, a specific tag for epigenetic transcriptional activation, thereby acting as a corepressor. Has a role in regulating heterochromatin propagation and euchromatic transcription. This is SWM histone demethylase complex subunit phf2 (phf2) from Schizosaccharomyces pombe (strain 972 / ATCC 24843) (Fission yeast).